A 212-amino-acid polypeptide reads, in one-letter code: Transcriptional regulator GfcR (212 aa).

It belongs to the purine/pyrimidine phosphoribosyltransferase family. GfcR subfamily.

Its function is as follows. DNA-binding transcriptional regulator that functions as a regulator of central sugar catabolic pathways. The protein is Transcriptional regulator GfcR of Halobacterium salinarum (strain ATCC 29341 / DSM 671 / R1).